An 853-amino-acid polypeptide reads, in one-letter code: Guanine nucleotide exchange protein smcr8a (853 aa).

A uDENN FLCN/SMCR8-type domain is found at 47–219; it reads TSYAKFSKDF…KETELQKMNN (173 aa). Disordered regions lie at residues 272 to 298 and 418 to 454; these read PVMD…SRKS and LKPG…SFSS. Residues 280-298 are compositionally biased toward polar residues; sequence DTNPSDSAENTVETESRKS. The cDENN FLCN/SMCR8-type domain maps to 316–753; the sequence is RLKTLEELCD…LISHLADHRT (438 aa). Residues 421–432 are compositionally biased toward low complexity; that stretch reads GVESGEGPPESS. Residues 433–454 are compositionally biased toward polar residues; the sequence is TSDITQETSEAADTETKGSFSS. Residues 762 to 826 form the dDENN FLCN/SMCR8-type domain; sequence FLHIQGMLTQ…IIQYLSELIK (65 aa).

It belongs to the SMCR8 family. As to quaternary structure, component of the C9orf72-SMCR8 complex. The C9orf72-SMCR8 complex associates with the ATG1/ULK1 kinase complex.

The protein resides in the cytoplasm. The protein localises to the nucleus. In terms of biological role, component of the C9orf72-SMCR8 complex, a complex that has guanine nucleotide exchange factor (GEF) activity and regulates autophagy. In the complex, C9orf72 and SMCR8 probably constitute the catalytic subunits that promote the exchange of GDP to GTP, converting inactive GDP-bound RAB8A and RAB39B into their active GTP-bound form, thereby promoting autophagosome maturation. The C9orf72-SMCR8 complex also acts as a negative regulator of autophagy initiation by interacting with the ATG1/ULK1 kinase complex and inhibiting its protein kinase activity. The chain is Guanine nucleotide exchange protein smcr8a (smcr8a) from Danio rerio (Zebrafish).